The following is a 718-amino-acid chain: Polyribonucleotide nucleotidyltransferase (718 aa).

2 residues coordinate Mg(2+): aspartate 487 and aspartate 493. Positions 554–613 (PRIETFKIPTDKIREVIGTGGKVIREIVEKTGAKVNIEDDGTVKVASSDGESIKAAIKWI) constitute a KH domain. In terms of domain architecture, S1 motif spans 623–691 (GEIYEGTVVK…DRGKTRLSMR (69 aa)). Residues 694–718 (DQETGEDLEAKQKAEGEAPAQATGE) are disordered.

The protein belongs to the polyribonucleotide nucleotidyltransferase family. It depends on Mg(2+) as a cofactor.

The protein resides in the cytoplasm. The enzyme catalyses RNA(n+1) + phosphate = RNA(n) + a ribonucleoside 5'-diphosphate. Functionally, involved in mRNA degradation. Catalyzes the phosphorolysis of single-stranded polyribonucleotides processively in the 3'- to 5'-direction. The sequence is that of Polyribonucleotide nucleotidyltransferase from Rhodopseudomonas palustris (strain HaA2).